The sequence spans 234 residues: Small ribosomal subunit protein eS4 (234 aa).

One can recognise an S4 RNA-binding domain in the interval Met-43 to Glu-106.

It belongs to the eukaryotic ribosomal protein eS4 family.

This is Small ribosomal subunit protein eS4 from Nanoarchaeum equitans (strain Kin4-M).